We begin with the raw amino-acid sequence, 186 residues long: UPF0397 protein lp_0150 (186 aa).

A run of 5 helical transmembrane segments spans residues 12-32, 45-65, 76-96, 112-132, and 151-171; these read VVAT…VAIP, GFLA…AVFI, GSPW…FGLA, LVWF…LLAP, and VITW…LLVL.

Belongs to the UPF0397 family.

Its subcellular location is the cell membrane. The chain is UPF0397 protein lp_0150 from Lactiplantibacillus plantarum (strain ATCC BAA-793 / NCIMB 8826 / WCFS1) (Lactobacillus plantarum).